The following is a 527-amino-acid chain: DNA polymerase epsilon subunit 2 (527 aa).

This sequence belongs to the DNA polymerase epsilon subunit B family. In terms of assembly, component of the DNA polymerase epsilon complex consisting of four subunits: the catalytic subunit POLE and the accessory subunits POLE2, POLE3 and POLE4.

The protein resides in the nucleus. Functionally, accessory component of the DNA polymerase epsilon complex. Participates in DNA repair and in chromosomal DNA replication. The protein is DNA polymerase epsilon subunit 2 (POLE2) of Bos taurus (Bovine).